A 271-amino-acid chain; its full sequence is MNTPEDSTLGREVAYPSGYDPSLLFPIPRAAGREAIGLTGALPFTGRDRWHAYELSWLDAHGKPCVATATLHVPHDSPALIESKSLKLYLNSLNATRFNSAEAVRTRIVTDLSTRAGADVSVEFGLPPIDGVGDGESIDALDVSIDDYGPPNAAYLTAQAQPVVEEVLTSALLKSNCPVTGQPDWASVTLHYRGAPIEREGLLRYLVSFRDHAEFHEQCVERIFHDVLLRCAPEWLVVEARYTRRGGLDINPLRSSLSVPAPLSVFRDLRQ.

Residue 81–83 (IES) participates in substrate binding. 83–84 (SK) contributes to the NADPH binding site. The Thioimide intermediate role is filled by C177. The active-site Proton donor is the D184. 216–217 (HE) is a substrate binding site. 245–246 (RG) provides a ligand contact to NADPH.

The protein belongs to the GTP cyclohydrolase I family. QueF type 2 subfamily. Homodimer.

The protein localises to the cytoplasm. The catalysed reaction is 7-aminomethyl-7-carbaguanine + 2 NADP(+) = 7-cyano-7-deazaguanine + 2 NADPH + 3 H(+). It participates in tRNA modification; tRNA-queuosine biosynthesis. Its function is as follows. Catalyzes the NADPH-dependent reduction of 7-cyano-7-deazaguanine (preQ0) to 7-aminomethyl-7-deazaguanine (preQ1). This chain is NADPH-dependent 7-cyano-7-deazaguanine reductase, found in Xanthomonas oryzae pv. oryzae (strain MAFF 311018).